We begin with the raw amino-acid sequence, 212 residues long: Lysozyme g-like protein 2 (212 aa).

Positions 1–19 (MLSSVVFWGLIALIGTSRG) are cleaved as a signal peptide. Cystine bridges form between Cys-39–Cys-92 and Cys-53–Cys-61. The active site involves Glu-105.

Belongs to the glycosyl hydrolase 23 family. Strong expression detected in the eye and weak expression in the testis. No expression is observed in any other tissues.

It localises to the secreted. Functionally, may act as a potent antibacterial protein that may play a role in the innate immunity. In Homo sapiens (Human), this protein is Lysozyme g-like protein 2 (LYG2).